The sequence spans 458 residues: UDP-N-acetylmuramate--L-alanine ligase (458 aa).

115–121 (GSHGKTT) contacts ATP.

Belongs to the MurCDEF family.

Its subcellular location is the cytoplasm. The catalysed reaction is UDP-N-acetyl-alpha-D-muramate + L-alanine + ATP = UDP-N-acetyl-alpha-D-muramoyl-L-alanine + ADP + phosphate + H(+). The protein operates within cell wall biogenesis; peptidoglycan biosynthesis. Its function is as follows. Cell wall formation. The polypeptide is UDP-N-acetylmuramate--L-alanine ligase (Anaeromyxobacter sp. (strain Fw109-5)).